The sequence spans 295 residues: Tissue factor (295 aa).

The N-terminal stretch at 1-32 is a signal peptide; sequence METPAWPRVPRPETAVARTLLLGWVFAQVAGA. Residues 33–251 are Extracellular-facing; it reads SGTTNTVAAY…MGQEKGEFRE (219 aa). 2 consecutive short sequence motifs (WKS motif) follow at residues 46-48 and 77-79; these read WKS. A disulfide bridge connects residues Cys81 and Cys89. Residues Asn156 and Asn169 are each glycosylated (N-linked (GlcNAc...) asparagine). The WKS motif motif lies at 190 to 192; the sequence is WKS. Cys218 and Cys241 form a disulfide bridge. A helical membrane pass occupies residues 252 to 274; sequence IFYIIGAVVFVVIILVIILAISL. At 275–295 the chain is on the cytoplasmic side; that stretch reads HKCRKAGVGQSWKENSPLNVS. Cys277 is lipidated: S-palmitoyl cysteine.

The protein belongs to the tissue factor family. Interacts with HSPE; the interaction, inhibited by heparin, promotes the generation of activated factor X and activates coagulation in the presence of activated factor VII. In terms of tissue distribution, lung, placenta and pancreas.

Its subcellular location is the membrane. The protein localises to the secreted. Initiates blood coagulation by forming a complex with circulating factor VII or VIIa. The [TF:VIIa] complex activates factors IX or X by specific limited proteolysis. TF plays a role in normal hemostasis by initiating the cell-surface assembly and propagation of the coagulation protease cascade. The chain is Tissue factor (F3) from Homo sapiens (Human).